Consider the following 224-residue polypeptide: Mammalian ependymin-related protein 1 (224 aa).

Residues 1-37 (MPGRAPLRTVPGALGAWLLGGLWAWTLCGLCSLGAVG) form the signal peptide. 3 disulfides stabilise this stretch: cysteine 42-cysteine 172, cysteine 88-cysteine 222, and cysteine 113-cysteine 210. Asparagine 130 and asparagine 182 each carry an N-linked (GlcNAc...) asparagine glycan.

This sequence belongs to the ependymin family. Homodimer. In terms of processing, N-glycosylated; the glycan contains mannose-6-phosphate moieties. As to expression, ubiquitous. Detected in brain, heart, skeletal muscle, kidney, testis, ovary and prostate.

The protein resides in the lysosome lumen. It localises to the secreted. Binds anionic lipids and gangliosides at acidic pH. The protein is Mammalian ependymin-related protein 1 (EPDR1) of Homo sapiens (Human).